The sequence spans 21 residues: Serine protease inhibitor 1 (21 aa).

Positions 1–21 constitute a Pacifastin domain; it reads EQQCTPGQTKKEDCNNCTSGD. The segment at 1 to 21 is disordered; it reads EQQCTPGQTKKEDCNNCTSGD.

It belongs to the protease inhibitor I19 family. Expressed in hemolymph.

It is found in the secreted. Probable serine protease inhibitor. The sequence is that of Serine protease inhibitor 1 from Melanoplus sanguinipes (Migratory grasshopper).